Consider the following 179-residue polypeptide: Cytochrome b6-f complex iron-sulfur subunit (179 aa).

A helical transmembrane segment spans residues 21 to 43 (LLTFGTVTGVALGALYPVVNYFI). In terms of domain architecture, Rieske spans 61 to 162 (GNDVSVTKFL…TNVSDDKIVL (102 aa)). [2Fe-2S] cluster contacts are provided by cysteine 108, histidine 110, cysteine 126, and histidine 129. A disulfide bridge connects residues cysteine 113 and cysteine 128.

This sequence belongs to the Rieske iron-sulfur protein family. The 4 large subunits of the cytochrome b6-f complex are cytochrome b6, subunit IV (17 kDa polypeptide, PetD), cytochrome f and the Rieske protein, while the 4 small subunits are PetG, PetL, PetM and PetN. The complex functions as a dimer. It depends on [2Fe-2S] cluster as a cofactor.

Its subcellular location is the cellular thylakoid membrane. It carries out the reaction 2 oxidized [plastocyanin] + a plastoquinol + 2 H(+)(in) = 2 reduced [plastocyanin] + a plastoquinone + 4 H(+)(out). Functionally, component of the cytochrome b6-f complex, which mediates electron transfer between photosystem II (PSII) and photosystem I (PSI), cyclic electron flow around PSI, and state transitions. The sequence is that of Cytochrome b6-f complex iron-sulfur subunit from Nostoc punctiforme (strain ATCC 29133 / PCC 73102).